Here is a 754-residue protein sequence, read N- to C-terminus: MKFTRRSFVKASALATAMVAAGCSPQPVAPKQNPETEGATWYKTVCRYCGVGCGVMVAAKDNRVVAVKGDTENPVNKGLLCVKGYYLDRIMNTEEGRILKPLIRKNGQLTEASWDEALDLVAARFREAIDQHGPDSVGFYGSGQNLAEETYIANKLFKGCIGTNNVEGNPRTCMASAVAGFLSTFGKDEPMGNLDDIEHADTFFIIGSNTAEAHPIIYSRITTRKQTGKDVKVILADPRRHRVADIADIFLPFRPGTDLALLNAFAQVIIEEGLHDPDFIERHTTFQDGNGAITFEQYVAFLQDYTPEKVAPITGLSPDDIRAAAREIGARGRKTMTLWCMGINQRTVGTWLNNAIYNLHLLTGKICQPGNSPFSLTGQPSACGSVREGGGLSHLLPCGRQVTNEQHRKEVAAVWGVDYTRMSDKVGYHTMEMFRAAGDGRIKALLISCTNPGHSLPNLNSVRASLEKTFLVVMDAFHNRTTELADVVLPSALWCEKEGIYGNTERRTQHLAKAVEPKGEARPDVWILLEIAKRLGYGEYFSHYTSNEVIWEEFRKMGGGGTGYDYAPYERYKQERGLRWPVNDKQPAGTTLRYVEGDDPFVPEGAGIYFYGKPDGKAVIYARPHRDPAEVPDAEYPFYLSTGRILEHWHTITMTKRVPEIMKGAGEFYCEIHEEDAARLGIQNGDLVKLTSRRGQVVATARVGGRAVPQKGLVFLLMHDDRTERLANFLTNDAVDETSKQMEYKVCAVRVEKA.

Positions 1–31 (MKFTRRSFVKASALATAMVAAGCSPQPVAPK) form a signal peptide, tat-type signal. The 4Fe-4S Mo/W bis-MGD-type domain maps to 39–95 (ATWYKTVCRYCGVGCGVMVAAKDNRVVAVKGDTENPVNKGLLCVKGYYLDRIMNTEE). [4Fe-4S] cluster contacts are provided by cysteine 46, cysteine 49, cysteine 53, and cysteine 81. Mo-bis(molybdopterin guanine dinucleotide)-binding positions include lysine 83, glutamine 144, asparagine 169, cysteine 173, 256–258 (GTD), methionine 341, glutamine 345, asparagine 451, lysine 497, aspartate 524, 642–651 (TGRILEHWHT), asparagine 728, and lysine 745.

This sequence belongs to the prokaryotic molybdopterin-containing oxidoreductase family. NasA/NapA/NarB subfamily. In terms of assembly, component of the nitrate reductase NapAB complex composed of NapA and NapB. [4Fe-4S] cluster serves as cofactor. Mo-bis(molybdopterin guanine dinucleotide) is required as a cofactor. Post-translationally, predicted to be exported by the Tat system. The position of the signal peptide cleavage has not been experimentally proven.

Its subcellular location is the secreted. The enzyme catalyses 2 Fe(II)-[cytochrome] + nitrate + 2 H(+) = 2 Fe(III)-[cytochrome] + nitrite + H2O. In terms of biological role, catalytic subunit of the nitrate reductase complex NapAB. Receives electrons from NapB and catalyzes the reduction of nitrate to nitrite. This chain is Nitrate reductase, found in Symbiobacterium thermophilum (strain DSM 24528 / JCM 14929 / IAM 14863 / T).